The sequence spans 79 residues: MAEAGARRPFFRRRKSCPFTGANAPKIDYKDSKLLMRYVSERGKIVPSRITAVSAKKQRELARAIKRARFLGLLPYVIR.

The protein belongs to the bacterial ribosomal protein bS18 family. As to quaternary structure, part of the 30S ribosomal subunit. Forms a tight heterodimer with protein bS6.

In terms of biological role, binds as a heterodimer with protein bS6 to the central domain of the 16S rRNA, where it helps stabilize the platform of the 30S subunit. This Bradyrhizobium diazoefficiens (strain JCM 10833 / BCRC 13528 / IAM 13628 / NBRC 14792 / USDA 110) protein is Small ribosomal subunit protein bS18.